The primary structure comprises 435 residues: Methanethiol oxidase (435 aa).

Positions 1–24 (MKKHLLAGACALAMGFAVIPGTFA) are cleaved as a signal peptide.

This sequence belongs to the selenium-binding protein family. In terms of assembly, homotetramer. It depends on Cu cation as a cofactor.

Its subcellular location is the periplasm. It catalyses the reaction methanethiol + O2 + H2O = hydrogen sulfide + formaldehyde + H2O2 + H(+). The protein operates within organosulfur degradation. Inhibited by EDTA but not by EGTA. In terms of biological role, catalyzes the oxidation of methanethiol. Can also degrade ethanethiol, but not methanol, methylamine or dimethylsulfide. This Hyphomicrobium sp protein is Methanethiol oxidase.